A 253-amino-acid chain; its full sequence is 5-oxoprolinase subunit A (253 aa).

Belongs to the LamB/PxpA family. As to quaternary structure, forms a complex composed of PxpA, PxpB and PxpC.

It catalyses the reaction 5-oxo-L-proline + ATP + 2 H2O = L-glutamate + ADP + phosphate + H(+). In terms of biological role, catalyzes the cleavage of 5-oxoproline to form L-glutamate coupled to the hydrolysis of ATP to ADP and inorganic phosphate. The polypeptide is 5-oxoprolinase subunit A (Bacillus cereus (strain ZK / E33L)).